The sequence spans 200 residues: Imidazole glycerol phosphate synthase subunit HisH (200 aa).

Residues 3 to 200 enclose the Glutamine amidotransferase type-1 domain; that stretch reads DVALIDAGGA…LRNFLEMSFP (198 aa). Catalysis depends on C78, which acts as the Nucleophile. Residues H179 and E181 contribute to the active site.

In terms of assembly, heterodimer of HisH and HisF.

The protein resides in the cytoplasm. The enzyme catalyses 5-[(5-phospho-1-deoxy-D-ribulos-1-ylimino)methylamino]-1-(5-phospho-beta-D-ribosyl)imidazole-4-carboxamide + L-glutamine = D-erythro-1-(imidazol-4-yl)glycerol 3-phosphate + 5-amino-1-(5-phospho-beta-D-ribosyl)imidazole-4-carboxamide + L-glutamate + H(+). The catalysed reaction is L-glutamine + H2O = L-glutamate + NH4(+). It functions in the pathway amino-acid biosynthesis; L-histidine biosynthesis; L-histidine from 5-phospho-alpha-D-ribose 1-diphosphate: step 5/9. IGPS catalyzes the conversion of PRFAR and glutamine to IGP, AICAR and glutamate. The HisH subunit catalyzes the hydrolysis of glutamine to glutamate and ammonia as part of the synthesis of IGP and AICAR. The resulting ammonia molecule is channeled to the active site of HisF. This Xanthomonas axonopodis pv. citri (strain 306) protein is Imidazole glycerol phosphate synthase subunit HisH.